The following is a 212-amino-acid chain: uncharacterized protein (212 aa).

Disordered stretches follow at residues 1 to 148 and 168 to 190; these read MEKD…LNDL and EVVT…LSED. Positions 61-70 are enriched in basic and acidic residues; the sequence is KELESEDQGK. Over residues 71 to 85 the composition is skewed to polar residues; the sequence is DPSSNAEDASCQKNL. Composition is skewed to basic and acidic residues over residues 99–115, 124–144, and 168–180; these read LGHE…KSDL, EGEH…ESIK, and EVVT…EKPS.

This is an uncharacterized protein from Homo sapiens (Human).